We begin with the raw amino-acid sequence, 232 residues long: Putative N-acetylmannosamine-6-phosphate 2-epimerase (232 aa).

Belongs to the NanE family.

It catalyses the reaction an N-acyl-D-glucosamine 6-phosphate = an N-acyl-D-mannosamine 6-phosphate. The protein operates within amino-sugar metabolism; N-acetylneuraminate degradation; D-fructose 6-phosphate from N-acetylneuraminate: step 3/5. Its function is as follows. Converts N-acetylmannosamine-6-phosphate (ManNAc-6-P) to N-acetylglucosamine-6-phosphate (GlcNAc-6-P). The sequence is that of Putative N-acetylmannosamine-6-phosphate 2-epimerase from Proteus mirabilis (strain HI4320).